Here is a 283-residue protein sequence, read N- to C-terminus: uncharacterized protein (283 aa).

A run of 3 helical transmembrane segments spans residues 24 to 44 (LFGY…GMFI), 64 to 84 (TIAG…TLIA), and 96 to 116 (VIAI…GSLS).

The protein belongs to the MscS (TC 1.A.23) family.

The protein resides in the cell membrane. This is an uncharacterized protein from Buchnera aphidicola subsp. Schizaphis graminum (strain Sg).